The primary structure comprises 303 residues: Glycine--tRNA ligase alpha subunit (303 aa).

Belongs to the class-II aminoacyl-tRNA synthetase family. As to quaternary structure, tetramer of two alpha and two beta subunits.

It localises to the cytoplasm. The catalysed reaction is tRNA(Gly) + glycine + ATP = glycyl-tRNA(Gly) + AMP + diphosphate. This is Glycine--tRNA ligase alpha subunit from Stenotrophomonas maltophilia (strain K279a).